The primary structure comprises 267 residues: 5'-nucleotidase SurE (267 aa).

Residues D9, D10, S40, and N97 each coordinate a divalent metal cation.

The protein belongs to the SurE nucleotidase family. Requires a divalent metal cation as cofactor.

It localises to the cytoplasm. The enzyme catalyses a ribonucleoside 5'-phosphate + H2O = a ribonucleoside + phosphate. In terms of biological role, nucleotidase that shows phosphatase activity on nucleoside 5'-monophosphates. The sequence is that of 5'-nucleotidase SurE from Helicobacter pylori (strain HPAG1).